The chain runs to 146 residues: Cystatin-C (146 aa).

The first 26 residues, 1–26 (MAGPLRAPLLLLAILAVALALSPAAG), serve as a signal peptide directing secretion. Phosphoserine is present on serine 43. Positions 81–85 (QIVAG) match the Secondary area of contact motif. 2 disulfide bridges follow: cysteine 99/cysteine 109 and cysteine 123/cysteine 143.

It belongs to the cystatin family.

The protein resides in the secreted. As an inhibitor of cysteine proteinases, this protein is thought to serve an important physiological role as a local regulator of this enzyme activity. The sequence is that of Cystatin-C (CST3) from Saimiri sciureus (Common squirrel monkey).